Reading from the N-terminus, the 404-residue chain is Probable cysteine desulfurase (404 aa).

N6-(pyridoxal phosphate)lysine is present on Lys221. Cys360 serves as the catalytic Cysteine persulfide intermediate.

Belongs to the class-V pyridoxal-phosphate-dependent aminotransferase family. Csd subfamily. It depends on pyridoxal 5'-phosphate as a cofactor.

It carries out the reaction (sulfur carrier)-H + L-cysteine = (sulfur carrier)-SH + L-alanine. Its function is as follows. Catalyzes the removal of elemental sulfur and selenium atoms from L-cysteine, L-cystine, L-selenocysteine, and L-selenocystine to produce L-alanine. This chain is Probable cysteine desulfurase (csd), found in Treponema pallidum (strain Nichols).